Reading from the N-terminus, the 159-residue chain is Probable carbonic anhydrase (159 aa).

Residues 33 to 35 and 48 to 49 each bind substrate; these read RGD and QD. Zn(2+) contacts are provided by His-54, His-71, and His-76.

Belongs to the gamma-class carbonic anhydrase family. Zn(2+) serves as cofactor.

It catalyses the reaction hydrogencarbonate + H(+) = CO2 + H2O. In terms of biological role, probably reversibly hydrates carbon dioxide. The protein is Probable carbonic anhydrase of Methanocaldococcus jannaschii (strain ATCC 43067 / DSM 2661 / JAL-1 / JCM 10045 / NBRC 100440) (Methanococcus jannaschii).